Consider the following 228-residue polypeptide: Small ribosomal subunit protein uS7A (228 aa).

Belongs to the universal ribosomal protein uS7 family.

This is Small ribosomal subunit protein uS7A (RpS5a) from Drosophila melanogaster (Fruit fly).